The primary structure comprises 305 residues: tRNA pseudouridine synthase B (305 aa).

Asp39 (nucleophile) is an active-site residue.

This sequence belongs to the pseudouridine synthase TruB family. Type 1 subfamily.

It carries out the reaction uridine(55) in tRNA = pseudouridine(55) in tRNA. Its function is as follows. Responsible for synthesis of pseudouridine from uracil-55 in the psi GC loop of transfer RNAs. The chain is tRNA pseudouridine synthase B from Staphylococcus epidermidis (strain ATCC 35984 / DSM 28319 / BCRC 17069 / CCUG 31568 / BM 3577 / RP62A).